Reading from the N-terminus, the 519-residue chain is Glutamate--cysteine ligase (519 aa).

It belongs to the glutamate--cysteine ligase type 1 family. Type 1 subfamily.

The catalysed reaction is L-cysteine + L-glutamate + ATP = gamma-L-glutamyl-L-cysteine + ADP + phosphate + H(+). It participates in sulfur metabolism; glutathione biosynthesis; glutathione from L-cysteine and L-glutamate: step 1/2. The polypeptide is Glutamate--cysteine ligase (Edwardsiella ictaluri (strain 93-146)).